The sequence spans 76 residues: Peptide ARACIN 1 (76 aa).

The first 22 residues, 1 to 22, serve as a signal peptide directing secretion; the sequence is MAMKTSHVLLLCLMFVIGFVEA. The propeptide at 23–35 is removed in mature form; that stretch reads RRSDTGPDISTPP. The short motif at 36–38 is the SxS motif essential for MIK2 binding element; that stretch reads SGS. Positions 36-49 match the SCOOP motif motif; sequence SGSCGASIAEFNSS. The disordered stretch occupies residues 56 to 76; that stretch reads APPCRRPRLQNSEDVTHTTLP. Residues 64-76 are compositionally biased toward polar residues; sequence LQNSEDVTHTTLP.

This sequence belongs to the serine rich endogenous peptide (SCOOP) phytocytokine family. As to quaternary structure, interacts with MIK2 (via extracellular leucine-rich repeat domain); this interaction triggers the formation of complex between MIK2 and the BAK1/SERK3 and SERK4 coreceptors, and subsequent BAK1 activation by phosphorylation. Mainly expressed in young developing leaves, hydathodes, immature flowers and elongating pollen tubes.

The protein localises to the cell membrane. It localises to the secreted. The protein resides in the extracellular space. Its subcellular location is the apoplast. It is found in the endoplasmic reticulum. Its function is as follows. Brassicaceae-specific phytocytokine (plant endogenous peptide released into the apoplast) perceived by MIK2 in a BAK1/SERK3 and SERK4 coreceptors-dependent manner, that modulates various physiological and antimicrobial processes including growth prevention and reactive oxygen species (ROS) response regulation. Inhibits the fungal growth of Alternaria brassicicola, Sclerotinia sclerotiorum, Fusarium graminearum, yeast (Saccharomyces) and Botrytis cinerea, thus being an antimicrobial peptide (AMP). Promotes resistance to A.brassicicola and B.cinerea. This Arabidopsis thaliana (Mouse-ear cress) protein is Peptide ARACIN 1.